Reading from the N-terminus, the 112-residue chain is uncharacterized protein (112 aa).

This is an uncharacterized protein from Methanocaldococcus jannaschii (strain ATCC 43067 / DSM 2661 / JAL-1 / JCM 10045 / NBRC 100440) (Methanococcus jannaschii).